A 117-amino-acid chain; its full sequence is MKWLLWLGYIFSFGLLYLWIVKKSKQIAQQPNTKLVESTSIPFKVKDFVSACGGKENFVNIKTTPTQLIVTFKDVNSVSLTKLNALNIKGINKNQNQFRFVLGNFVNELKKKIEDEQ.

Residues 1-21 traverse the membrane as a helical segment; that stretch reads MKWLLWLGYIFSFGLLYLWIV. Residues 42–117 form the PTS EIIB type-1 domain; sequence PFKVKDFVSA…ELKKKIEDEQ (76 aa).

Its subcellular location is the membrane. The phosphoenolpyruvate-dependent sugar phosphotransferase system (PTS), a major carbohydrate active -transport system, catalyzes the phosphorylation of incoming sugar substrates concomitant with their translocation across the cell membrane. In Mycoplasma genitalium (strain ATCC 33530 / DSM 19775 / NCTC 10195 / G37) (Mycoplasmoides genitalium), this protein is Putative phosphotransferase enzyme IIB component MG129.